Consider the following 477-residue polypeptide: Stromelysin-1 (477 aa).

The signal sequence occupies residues 1–17 (MKNLPILLLLCVAACSA). Positions 18–99 (YPLDRSARDE…SRCGVPDVGH (82 aa)) are cleaved as a propeptide — activation peptide. The Cysteine switch signature appears at 90–97 (SRCGVPDV). Residue C92 coordinates Zn(2+). The N-linked (GlcNAc...) asparagine glycan is linked to N120. Ca(2+) contacts are provided by D124 and D158. 2 residues coordinate Zn(2+): H168 and D170. Ca(2+) contacts are provided by D175, G176, G178, and V180. Residue H183 coordinates Zn(2+). Positions 190, 192, and 194 each coordinate Ca(2+). A Zn(2+)-binding site is contributed by H196. Residues D198, D199, and E201 each coordinate Ca(2+). H218 serves as a coordination point for Zn(2+). E219 is an active-site residue. Residues H222 and H228 each coordinate Zn(2+). The interval 260-285 (QSLYGPPPASPDSPVEPSEPEPPAPG) is disordered. Hemopexin repeat units lie at residues 287–336 (LAMC…WPSL), 337–383 (PSGI…GFPP), 385–433 (VRKI…FPGI), and 434–477 (DSKL…WFNC). An intrachain disulfide couples C290 to C477. D297 serves as a coordination point for Ca(2+). The Ca(2+) site is built by D389 and D438.

The protein belongs to the peptidase M10A family. The cofactor is Ca(2+). Zn(2+) serves as cofactor.

The protein resides in the secreted. It localises to the extracellular space. Its subcellular location is the extracellular matrix. The catalysed reaction is Preferential cleavage where P1', P2' and P3' are hydrophobic residues.. In terms of biological role, metalloproteinase with a rather broad substrate specificity that can degrade fibronectin, laminin, gelatins of type I, III, IV, and V; collagens III, IV, X, and IX, and cartilage proteoglycans. Activates different molecules including growth factors, plasminogen or other matrix metalloproteinases such as MMP9. Once released into the extracellular matrix (ECM), the inactive pro-enzyme is activated by the plasmin cascade signaling pathway. Also acts intracellularly. For example, in dopaminergic neurons, gets activated by the serine protease HTRA2 upon stress and plays a pivotal role in DA neuronal degeneration by mediating microglial activation and alpha-synuclein/SNCA cleavage. In addition, plays a role in immune response and possesses antiviral activity against various viruses. Mechanistically, translocates from the cytoplasm into the cell nucleus upon virus infection to influence NF-kappa-B activities. The protein is Stromelysin-1 (MMP3) of Equus caballus (Horse).